Consider the following 226-residue polypeptide: UPF0758 protein SUB0843 (226 aa).

One can recognise an MPN domain in the interval 103–225 (QILSSYQVAK…YYSFREKSDI (123 aa)). The Zn(2+) site is built by H174, H176, and D187. Residues 174–187 (HNHPSGLTNPSEND) carry the JAMM motif motif.

The protein belongs to the UPF0758 family.

The chain is UPF0758 protein SUB0843 from Streptococcus uberis (strain ATCC BAA-854 / 0140J).